The following is a 576-amino-acid chain: MDIKLLYRLAKYLRFYKKDLIIVMISLLSVSASLLLIGSIFRDLIDRGLAEDNILSVNKSILYICLLIVILSVASFFRSYFINNVAEKIVNQIRKEAYSNLINYEIEEYEELKIGDIISRLTNDIDQIATLIVNFLSFFIRNSVMLIGSITLMFFESFKLASIVIITIPILLVPLIKFGKHVKALSKKALESKSLLVSDIDETFNNIRVIYAFNHQINKIADFDTKLQSYLIYCKTRLKIRALFFAISIAVIFLTITLIVWIGASDIVQGDLSAGQIISFIYYAIIAGVSSGGIFELLSEMHLPTTALERIITIIDKTSIVHNNYYALNNSDAISIEFKNVDFTYNSRPNLKVINNMSLKINSNKFVGIVGRSGAGKSTLIQLLLRFYRQENGTILINNQDISFVKPTDIRKFIAYVPQEASIFSDTIKSNIIFGNNKASDYEINEIIKITGIEEFSTKLHDGINTKIGEKGVRLSGGQKQRIAIARALLRKPKILLLDEAMSALDTMSEQKLLNAIKKIMKGNIIISIAHRISSIESADYILVIDKGGVVTEGSHYDLSKNSEIYRNICREQLTI.

The ABC transmembrane type-1 domain maps to 20–303 (LIIVMISLLS…IFELLSEMHL (284 aa)). 6 consecutive transmembrane segments (helical) span residues 21 to 41 (IIVM…GSIF), 61 to 81 (ILYI…RSYF), 135 to 155 (FLSF…LMFF), 158 to 178 (FKLA…LIKF), 242 to 262 (ALFF…IVWI), and 277 to 297 (IISF…IFEL). An ABC transporter domain is found at 336-572 (IEFKNVDFTY…SEIYRNICRE (237 aa)). 371 to 378 (GRSGAGKS) is an ATP binding site.

This sequence belongs to the ABC transporter superfamily. As to quaternary structure, homodimer.

It localises to the cell inner membrane. Functionally, part of an ABC transporter complex. Transmembrane domains (TMD) form a pore in the inner membrane and the ATP-binding domain (NBD) is responsible for energy generation. The sequence is that of Putative export ATP-binding/permease protein RP696 from Rickettsia prowazekii (strain Madrid E).